We begin with the raw amino-acid sequence, 279 residues long: Large ribosomal subunit protein uL2 (279 aa).

The tract at residues 218–279 (RPQTRGSAMN…ITRRKSNPKR (62 aa)) is disordered. The span at 255-279 (KGSKTRRKKASDKLIITRRKSNPKR) shows a compositional bias: basic residues.

It belongs to the universal ribosomal protein uL2 family. As to quaternary structure, part of the 50S ribosomal subunit. Forms a bridge to the 30S subunit in the 70S ribosome.

In terms of biological role, one of the primary rRNA binding proteins. Required for association of the 30S and 50S subunits to form the 70S ribosome, for tRNA binding and peptide bond formation. It has been suggested to have peptidyltransferase activity; this is somewhat controversial. Makes several contacts with the 16S rRNA in the 70S ribosome. In Sulfurimonas denitrificans (strain ATCC 33889 / DSM 1251) (Thiomicrospira denitrificans (strain ATCC 33889 / DSM 1251)), this protein is Large ribosomal subunit protein uL2.